Consider the following 423-residue polypeptide: Maltoporin 1 (423 aa).

The signal sequence occupies residues 1–24; the sequence is MITLRKLPIALAVAAGVLSTQAMA.

It belongs to the porin LamB (TC 1.B.3) family. As to quaternary structure, homotrimer formed of three 18-stranded antiparallel beta-barrels, containing three independent channels.

The protein localises to the cell outer membrane. The catalysed reaction is beta-maltose(in) = beta-maltose(out). Its function is as follows. Involved in the transport of maltose and maltodextrins. In Yersinia pestis bv. Antiqua (strain Antiqua), this protein is Maltoporin 1.